Here is a 106-residue protein sequence, read N- to C-terminus: UPF0145 protein BDI_2732 (106 aa).

It belongs to the UPF0145 family.

This chain is UPF0145 protein BDI_2732, found in Parabacteroides distasonis (strain ATCC 8503 / DSM 20701 / CIP 104284 / JCM 5825 / NCTC 11152).